We begin with the raw amino-acid sequence, 345 residues long: NADPH dehydrogenase (345 aa).

Residue 23–26 (SPMC) coordinates FMN. Residue Y28 participates in substrate binding. A60 and Q102 together coordinate FMN. 164–167 (HGAH) provides a ligand contact to substrate. FMN is bound by residues R215 and 307-308 (GR).

It belongs to the NADH:flavin oxidoreductase/NADH oxidase family. NamA subfamily. In terms of assembly, homotetramer. Requires FMN as cofactor.

It catalyses the reaction A + NADPH + H(+) = AH2 + NADP(+). Its function is as follows. Catalyzes the reduction of the double bond of an array of alpha,beta-unsaturated aldehydes and ketones. It also reduces the nitro group of nitroester and nitroaromatic compounds. It could have a role in detoxification processes. The sequence is that of NADPH dehydrogenase from Bacillus cereus (strain B4264).